The sequence spans 258 residues: Hemin import ATP-binding protein HmuV (258 aa).

The ABC transporter domain maps to 1-238; sequence MLDIDVSNLS…DILERTYRTP (238 aa). 34–41 is a binding site for ATP; it reads GENGAGKS.

It belongs to the ABC transporter superfamily. Heme (hemin) importer (TC 3.A.1.14.5) family. The complex is composed of two ATP-binding proteins (HmuV), two transmembrane proteins (HmuU) and a solute-binding protein (HmuT).

The protein resides in the cell inner membrane. Its function is as follows. Part of the ABC transporter complex HmuTUV involved in hemin import. Responsible for energy coupling to the transport system. This chain is Hemin import ATP-binding protein HmuV, found in Idiomarina loihiensis (strain ATCC BAA-735 / DSM 15497 / L2-TR).